The chain runs to 91 residues: Large ribosomal subunit protein uL23c (91 aa).

Belongs to the universal ribosomal protein uL23 family. In terms of assembly, part of the 50S ribosomal subunit.

It localises to the plastid. Its subcellular location is the chloroplast. In terms of biological role, binds to 23S rRNA. The chain is Large ribosomal subunit protein uL23c (rpl23) from Huperzia lucidula (Shining clubmoss).